The chain runs to 291 residues: Lipase (291 aa).

The signal sequence occupies residues 1–17 (MRSSLVLFFVSAWTALA). The propeptide occupies 18–22 (SPIRR). Disulfide bonds link cysteine 44–cysteine 290, cysteine 58–cysteine 63, and cysteine 126–cysteine 129. The Nucleophile role is filled by serine 168. Catalysis depends on charge relay system residues aspartate 223 and histidine 280.

This sequence belongs to the AB hydrolase superfamily. Lipase family.

It catalyses the reaction a triacylglycerol + H2O = a diacylglycerol + a fatty acid + H(+). In Thermomyces lanuginosus (Humicola lanuginosa), this protein is Lipase (LIP).